Here is an 842-residue protein sequence, read N- to C-terminus: Elongation factor 2 (842 aa).

Residues Thr-17–Lys-253 enclose the tr-type G domain. Residues Ala-26–Ser-33, Asn-158–Asp-161, and Ser-213–Leu-215 each bind GTP. Diphthamide is present on His-699.

Belongs to the TRAFAC class translation factor GTPase superfamily. Classic translation factor GTPase family. EF-G/EF-2 subfamily.

It localises to the cytoplasm. The enzyme catalyses GTP + H2O = GDP + phosphate + H(+). In terms of biological role, catalyzes the GTP-dependent ribosomal translocation step during translation elongation. During this step, the ribosome changes from the pre-translocational (PRE) to the post-translocational (POST) state as the newly formed A-site-bound peptidyl-tRNA and P-site-bound deacylated tRNA move to the P and E sites, respectively. Catalyzes the coordinated movement of the two tRNA molecules, the mRNA and conformational changes in the ribosome. This Komagataella pastoris (Yeast) protein is Elongation factor 2 (EFT1).